Here is a 1045-residue protein sequence, read N- to C-terminus: FERM, ARHGEF and pleckstrin domain-containing protein 1 (1045 aa).

Positions Met1–Gly37 are disordered. Phosphoserine is present on residues Ser20 and Ser23. Thr24 bears the Phosphothreonine mark. Residues Val40–Glu320 form the FERM domain. Phosphoserine occurs at positions 340, 373, 389, 403, 418, 427, and 433. The tract at residues Phe361 to Lys534 is disordered. Over residues Ser373–Thr396 the composition is skewed to polar residues. Composition is skewed to polar residues over residues Thr471–Gly489 and Val496–Pro511. 2 positions are modified to phosphoserine: Ser510 and Ser514. Residues Lys540–Thr730 form the DH domain. The PH 1 domain maps to Glu759–Asp856. Ser833, Ser872, and Ser878 each carry phosphoserine. The segment at Pro864–Gln903 is disordered. Thr883 carries the post-translational modification Phosphothreonine. Residues Ser889, Ser896, and Ser899 each carry the phosphoserine modification. Residues Glu932–Ser1029 enclose the PH 2 domain.

Interacts with CADM1. Interacts with RAC1. As to expression, detected in cAMP-treated chondrocytes, but not in untreated chondrocytes. Detected in fetal brain, heart and spleen, and in adult testis, kidney and lung.

Its subcellular location is the cell membrane. It is found in the synapse. The protein localises to the synaptosome. It localises to the cytoplasm. The protein resides in the cytosol. Its subcellular location is the cell projection. It is found in the filopodium. The protein localises to the dendrite. It localises to the dendritic spine. Its function is as follows. Functions as a guanine nucleotide exchange factor for RAC1. May play a role in semaphorin signaling. Plays a role in the assembly and disassembly of dendritic filopodia, the formation of dendritic spines, regulation of dendrite length and ultimately the formation of synapses. This is FERM, ARHGEF and pleckstrin domain-containing protein 1 (FARP1) from Homo sapiens (Human).